Here is a 285-residue protein sequence, read N- to C-terminus: V-set and transmembrane domain-containing protein 2B (285 aa).

The N-terminal stretch at 1–28 (MEQRNRLGALGYLLPLLLHSLLLFVADA) is a signal peptide. The region spanning 29 to 143 (TFTEVPKDVT…DDDTQEHKAQ (115 aa)) is the Ig-like V-type domain. At 29 to 263 (TFTEVPKDVT…HGSGTGPGYS (235 aa)) the chain is on the extracellular side. An intrachain disulfide couples cysteine 49 to cysteine 127. The interval 160–225 (AEAVSHIQSS…AAAAAASATH (66 aa)) is disordered. Low complexity-rich tracts occupy residues 176 to 189 (ASSA…GAAV) and 208 to 225 (PAGS…SATH). The helical transmembrane segment at 264–284 (ADPLLSLLLLALHKFLHPLLG) threads the bilayer. Residue histidine 285 is a topological domain, cytoplasmic.

The protein resides in the membrane. In Mus musculus (Mouse), this protein is V-set and transmembrane domain-containing protein 2B (Vstm2b).